Reading from the N-terminus, the 246-residue chain is Major prion protein (246 aa).

Positions 1–15 (MLVVFVATWSDLGLC) are cleaved as a signal peptide. An interaction with GRB2, ERI3 and SYN1 region spans residues 16 to 223 (KKRPKPGGWN…ESQAYYQRGS (208 aa)). The disordered stretch occupies residues 18–100 (RPKPGGWNTG…QWHKPSKPKT (83 aa)). A run of 5 repeats spans residues 44 to 52 (PQGGGGWGQ), 53 to 60 (PHGGGWGQ), 61 to 68 (PHGGGWGQ), 69 to 76 (PHGGGWGQ), and 77 to 84 (PHGGGWGQ). The interval 44-84 (PQGGGGWGQPHGGGWGQPHGGGWGQPHGGGWGQPHGGGWGQ) is 5 X 8 AA tandem repeats of P-H-G-G-G-W-G-Q. Gly residues predominate over residues 45-88 (QGGGGWGQPHGGGWGQPHGGGWGQPHGGGWGQPHGGGWGQGGGT). His-54, Gly-55, Gly-56, His-62, Gly-63, Gly-64, His-70, Gly-71, Gly-72, His-78, Gly-79, and Gly-80 together coordinate Cu(2+). A compositionally biased stretch (basic residues) spans 91–100 (QWHKPSKPKT). Cys-172 and Cys-207 are joined by a disulfide. Asn-174 and Asn-190 each carry an N-linked (GlcNAc...) asparagine glycan. Residue Ser-223 is the site of GPI-anchor amidated serine attachment. The propeptide at 224–246 (SMVLFSSPPVILLISFLIFLIVG) is removed in mature form.

It belongs to the prion family. Monomer and homodimer. Has a tendency to aggregate into amyloid fibrils containing a cross-beta spine, formed by a steric zipper of superposed beta-strands. Soluble oligomers may represent an intermediate stage on the path to fibril formation. Copper binding may promote oligomerization. Interacts with GRB2, APP, ERI3/PRNPIP and SYN1. Mislocalized cytosolically exposed PrP interacts with MGRN1; this interaction alters MGRN1 subcellular location and causes lysosomal enlargement. Interacts with KIAA1191.

It is found in the cell membrane. It localises to the golgi apparatus. In terms of biological role, its primary physiological function is unclear. Has cytoprotective activity against internal or environmental stresses. May play a role in neuronal development and synaptic plasticity. May be required for neuronal myelin sheath maintenance. May play a role in iron uptake and iron homeostasis. Soluble oligomers are toxic to cultured neuroblastoma cells and induce apoptosis (in vitro). Association with GPC1 (via its heparan sulfate chains) targets PRNP to lipid rafts. Also provides Cu(2+) or Zn(2+) for the ascorbate-mediated GPC1 deaminase degradation of its heparan sulfate side chains. This chain is Major prion protein (PRNP), found in Erythrocebus patas (Red guenon).